A 344-amino-acid chain; its full sequence is Ferrochelatase (344 aa).

The Fe cation site is built by His214 and Glu295.

Belongs to the ferrochelatase family.

It localises to the cytoplasm. The catalysed reaction is heme b + 2 H(+) = protoporphyrin IX + Fe(2+). Its pathway is porphyrin-containing compound metabolism; protoheme biosynthesis; protoheme from protoporphyrin-IX: step 1/1. Catalyzes the ferrous insertion into protoporphyrin IX. This is Ferrochelatase from Allorhizobium ampelinum (strain ATCC BAA-846 / DSM 112012 / S4) (Agrobacterium vitis (strain S4)).